We begin with the raw amino-acid sequence, 209 residues long: Tumor suppressor candidate gene 1 protein (209 aa).

Disordered stretches follow at residues 1–55 (MWRM…DGAR), 111–157 (ALRL…LRAR), and 172–209 (LHLE…GPWL). Gly residues predominate over residues 14-47 (CCGGDGAADGRGPGRSGRARGGGSPSGGGGGVGW). Residues 70–114 (LEAIRARDEWDRQNARLRQENARLRLENRRLKRENRSLFRQALRL) adopt a coiled-coil conformation. Over residues 125 to 149 (EARRVPEEASTNRRARDSGREDEPG) the composition is skewed to basic and acidic residues. S150 is subject to Phosphoserine. A coiled-coil region spans residues 152–177 (RALRARLEKLEAMYRRALLQLHLEQR). The segment covering 174–188 (LEQRGPRPSGDKEEQ) has biased composition (basic and acidic residues).

In terms of tissue distribution, widely expressed at low level. Expressed at higher level in testis, weakly expressed in muscle, colon, lung and spleen. Not detected in 3 non small cell lung carcinoma (NSCLC) cell lines with homozygous deletion of the 9p region, while it is down-regulated in 3 other tumor cell lines.

The sequence is that of Tumor suppressor candidate gene 1 protein (TUSC1) from Homo sapiens (Human).